The primary structure comprises 238 residues: Ribosomal RNA large subunit methyltransferase E (238 aa).

S-adenosyl-L-methionine-binding residues include Gly-76, Trp-78, Asp-99, Asp-115, and Asp-139. Residue Lys-179 is the Proton acceptor of the active site.

Belongs to the class I-like SAM-binding methyltransferase superfamily. RNA methyltransferase RlmE family.

It is found in the cytoplasm. It carries out the reaction uridine(2552) in 23S rRNA + S-adenosyl-L-methionine = 2'-O-methyluridine(2552) in 23S rRNA + S-adenosyl-L-homocysteine + H(+). Specifically methylates the uridine in position 2552 of 23S rRNA at the 2'-O position of the ribose in the fully assembled 50S ribosomal subunit. This chain is Ribosomal RNA large subunit methyltransferase E, found in Rhodopseudomonas palustris (strain BisB18).